Consider the following 904-residue polypeptide: Toll-like receptor 3 (904 aa).

Positions 1-26 (MSRPLPYHIYFFTGLLTCWILCTSSA) are cleaved as a signal peptide. Positions 27–52 (HKCTVRHEVADCSHLKLTQIPEDLPT) constitute an LRRNT domain. Residues 27–705 (HKCTVRHEVA…PCKDSAPFEL (679 aa)) are Lumenal-facing. A disulfide bond links Cys-29 and Cys-38. N-linked (GlcNAc...) asparagine glycans are attached at residues Asn-53, Asn-58, and Asn-71. LRR repeat units lie at residues 53-74 (NITV…NFTR), 77-98 (RLTI…LCQN), 101-122 (WLEI…TFVF), 125-146 (NLTE…PFKN), 149-170 (NLIK…TQLQ), and 173-196 (NLQE…DFLG). Cys-96 and Cys-123 form a disulfide bridge. N-linked (GlcNAc...) asparagine glycosylation occurs at Asn-125. Asn-197 is a glycosylation site (N-linked (GlcNAc...) asparagine). LRR repeat units lie at residues 199–220 (SLER…CFHA) and 223–245 (KLSG…LCLE). N-linked (GlcNAc...) asparagine glycans are attached at residues Asn-248, Asn-253, Asn-276, and Asn-292. 14 LRR repeats span residues 250-271 (SIEN…TFSG), 276-297 (NLTT…SFAW), 300-321 (HLEY…SFYG), 324-345 (NLRH…TSLP), 357-378 (CLEY…TFTG), 381-401 (RLKF…TNET), 409-430 (PLLL…AFSW), 433-455 (HLEV…EWRG), 466-487 (YNKY…QRLM), 508-529 (NLVI…LLKG), 532-553 (KLEI…ANPG), 564-585 (HLRI…AFKD), 588-609 (ELKS…VFDN), and 612-633 (SLKS…VFGP). Asn-399 and Asn-414 each carry an N-linked (GlcNAc...) asparagine glycan. Asn-637, Asn-663, and Asn-668 each carry an N-linked (GlcNAc...) asparagine glycan. One can recognise an LRRCT domain in the interval 646–699 (NPFDCTCESIAWFVNWINSTHTNISELSNHYLCNTPPQYHGFPVMLFDVSPCKD). 2 cysteine pairs are disulfide-bonded: Cys-650/Cys-678 and Cys-652/Cys-697. A helical membrane pass occupies residues 706 to 726 (LFMINTNILLIFIFIVLLIHF). Over 727–904 (EGWRISFYWN…VALGSRNSAH (178 aa)) the chain is Cytoplasmic. Residues 754–897 (FEYAAYIIHA…AFHHKLKVAL (144 aa)) form the TIR domain. Tyr-759 is subject to Phosphotyrosine. Glycyl lysine isopeptide (Lys-Gly) (interchain with G-Cter in ubiquitin) cross-links involve residues Lys-812 and Lys-831. At Tyr-858 the chain carries Phosphotyrosine.

It belongs to the Toll-like receptor family. In terms of assembly, monomer and homodimer; dimerization is triggered by ligand-binding and is required for TLR3 signaling. Interacts (via transmembrane domain) with UNC93B1. Interacts with TICAM1 (via the TIR domain) in response to poly(I:C) and this interaction is enhanced the presence of WDFY1. Interacts with SRC; upon binding of double-stranded RNA. The tyrosine-phosphorylated form (via TIR domain) interacts with WDFY1 (via WD repeat 2) in response to poly(I:C). Post-translationally, ubiquitinated by TRIM3; leading to recognition and sorting of polyubiquitinated TLR3 by the ESCRT complexes. Ubiquitinated by ZNRF1 via 'Lys-63'-linked ubiquitin chains; leading to TLR3 lysosomal trafficking and degradation.

It localises to the endoplasmic reticulum membrane. Its subcellular location is the endosome membrane. The protein localises to the early endosome. Functionally, key component of innate and adaptive immunity. TLRs (Toll-like receptors) control host immune response against pathogens through recognition of molecular patterns specific to microorganisms. TLR3 is a nucleotide-sensing TLR which is activated by double-stranded RNA, a sign of viral infection. Acts via the adapter TRIF/TICAM1, leading to NF-kappa-B activation, cytokine secretion and the inflammatory response. The polypeptide is Toll-like receptor 3 (TLR3) (Boselaphus tragocamelus (Nilgai)).